A 905-amino-acid polypeptide reads, in one-letter code: MGTGSSREQHLNSFNTLQKETVPFSSDLWKTILSQNLEDDSLYLENLKKLKNERPENLATFIKKLVNQLVLVKGLQRETNTPGDFQLTSISLSYLSRILPIVFESGDDFADKVFWLNEGIEPLSHPSAKISTPPSITTTKTTEIIEEQEKKDQENKQVEENKENEEKKDEEKKDEEKKDEEKKDEDKKENKTTTTTTTTNTTNNTNNNNNSDESSFDTTPLAVKLMDSLLDLLFFPGFTVTESLGLKSPKEASPDAIPVLFSWAGGFGVDSVPTVHNKQFWINRLSVLQCLITCLSEQLYVPQDSVSTFKSKWLDWITHTQEYYTEALLFSLINTFATFDPIGWGIPYNHLMYSDDHEICSKLSIQILNVLLTYDPIENNDQQPQQQHHHHQQQHHQQQQQQQQSTIECRNKFIQYIKTLKRVRDFKFFFNAFERIMNVPLIASHTKLPNSTKKIELHQDLTYTMWLFLSYNHDFLRSIVNYENSPEFLIPLLQYMDEGRKSQTTHGIVQIGTFILLLLSGERDFSISLNKPFVGRIHIDIQQPQVYSDFVITVMYRLLVDTPDRLESIYECVLTILSNLSPYMKNLSMVTCVKLMKLFEYLSTPRFLFATNHNYRYVGFLLESLNNLLQHQYESNTRLIYAILRCQNQFSKLAYLKISPVTPSKPMEQITQPSPISTSEEAFGKLNKLSISEEPSTLSNEKSDKTTDGGDHQDESISKSKVQSKPTTEHPNSTGATPSSTNSGTPTIKAFSSTTPNQESPKLGGDGIDSQSSTPNKQQLPPPPPQQTKKTQMVSHFMPTDEWLQDIKKQLPLDNILKVITHLSPQIQGLCTGSGSDEQKIMDYLKMSTIVGIFHNPGPIMTRRYHSNAITKSWFIAYMWCIIYLENHSPPLFLHTNIKLFQVKQ.

Positions 139–191 (TKTTEIIEEQEKKDQENKQVEENKENEEKKDEEKKDEEKKDEEKKDEDKKENK) form a coiled coil. Residues 147-191 (EQEKKDQENKQVEENKENEEKKDEEKKDEEKKDEEKKDEDKKENK) show a composition bias toward basic and acidic residues. 3 disordered regions span residues 147–217 (EQEK…SSFD), 381–404 (DQQPQQQHHHHQQQHHQQQQQQQQ), and 690–793 (SISE…KTQM). Composition is skewed to low complexity over residues 192 to 210 (TTTTTTTTNTTNNTNNNNN) and 395 to 404 (HHQQQQQQQQ). Residues 690-700 (SISEEPSTLSN) are compositionally biased toward polar residues. Over residues 701–718 (EKSDKTTDGGDHQDESIS) the composition is skewed to basic and acidic residues. Polar residues predominate over residues 719–760 (KSKVQSKPTTEHPNSTGATPSSTNSGTPTIKAFSSTTPNQES).

It belongs to the hid-1 family.

In Dictyostelium discoideum (Social amoeba), this protein is Protein HID1 (hid1).